Reading from the N-terminus, the 265-residue chain is uncharacterized protein (265 aa).

Disordered regions lie at residues 62–94 (RNKKKEEKKGKGLMTARGGNRRDTETSQQALGK) and 118–149 (MVPGSYIKDGPKKSDTDIKDAVDPESTQRPNP). Positions 126–139 (DGPKKSDTDIKDAV) are enriched in basic and acidic residues.

This is an uncharacterized protein from Homo sapiens (Human).